The sequence spans 197 residues: Protein TIFY 9 (197 aa).

The segment covering 57-73 (STGNNSDSSAKSRSVPS) has biased composition (polar residues). The tract at residues 57–84 (STGNNSDSSAKSRSVPSTPREDQPQIPI) is disordered. Residues 98-132 (LVSGTVPMTIFYNGSVSVFQVSRNKAGEIMKVANE) enclose the Tify domain. The Jas signature appears at 168-193 (PIARRKSLQRFLEKRKERLVSTSPYY). A Nuclear localization signal motif is present at residues 170–177 (ARRKSLQR).

This sequence belongs to the TIFY/JAZ family. As to quaternary structure, homo- and heterodimer. Interacts with MYC2, MYC3, MYC4, AFPH2/NINJA, TIFY10A/JAZ1, TIFY10B/JAZ2, TIFY6B/JAZ3, TIFY6A/JAZ4, TIFY11B/JAZ6, TIFY5A/JAZ8, TIFY7/JAZ9, TIFY3A/JAZ11 and TIFY3B/JAZ12. Isoform 1 and isoform 2 interact with COI1. Isoform 3 does not interact with COI1. Interacts with RHD6 and RSL1. In terms of processing, ubiquitinated. Targeted for degradation by the SCF(COI1) E3 ubiquitin ligase-proteasome pathway during jasmonate signaling.

The protein localises to the nucleus. Its function is as follows. Repressor of jasmonate (JA) responses that lacks the entire Jas domain and possesses severe JA insensitivity and resistance to JA-induced degradation. Acts as an endogenous repressor of JA signal output in JA-stimulated cells. Modulator of JA-controlled growth inhibition in response to wounding. Functionally, repressor of jasmonate (JA) responses that lacks part of the Jas domain and possesses JA insensitivity and partial resistance to JA-induced degradation. In terms of biological role, repressor of jasmonate (JA) responses. Interacts with and suppresses RHD6 and RSL1 transcription factor activities to negatively regulate jasmonate-stimulated root hair development. This Arabidopsis thaliana (Mouse-ear cress) protein is Protein TIFY 9 (TIFY9).